The following is a 1406-amino-acid chain: MKDLLKFLKQQNQTEDFDGIRIGLASPDLVRSWSFGEVKKPETINYRTFKPERDGLFCARIFGPVKDYECLCGKYKRLKHRGVICEKCGVEVTLTKVRRDRMGHIELASPVAHIWFLKSLPSRIGLLLDMTLRDIERVLYFESYVVTEPGMTTLEKSQILTEEEYLDALEEHGDEFDALMGAEAVLALLQQIDLDGEVAQMREELPEIGSETKRKKITKRLKLMEAFAASGNKPEWMIMNVLPILPPDLRPLVPLDGGRFATSDLNDLYRRVINRNNRLKRLLDLVAPDIIVRNEKRMLQESVDALLDNGRRGRAITGSNKRPLKSLADMIKGKQGRFRQNLLGKRVDYSGRSVITVGPTLKLHQCGLPKKMALELFKPFIYGKLEARGLATTIKAAKKLVEREGAEVWDVLDEVIREHPVMLNRAPTLHRLGIQAFEPVLIEGKAIHLHPLVCAAYNADFDGDQMAVHVPLTIEAQMEARTLMMSTNNVLAPANGEPIIVPSQDVVLGLYYLTRFRINGLGEGMYFTDEKEVEKAYRTGVAELHARIKVRITEHVKNADGEWEPVTKLRDTTVGRAIMWQVCPKGLPYDLIDKPLGKKPISKLINHAYRNLGLKETVMFADQIMYTGFHYAMIAGCSVGIDDMVIPEAKYTIVEDSEAEVAEIQAQFDQGLVTAGEKYNKVIDIWSSANEKVSKAMMDNLSKEMVMNRDGEMEEQDSFNSIFMMADSGARGSAAQIRQLAGMRGLMAKPDGSIIETPIKANFREGLTVLQYFISTHGARKGLADTALKTANSGYLTRRLVDVAQDLVVTNHDCGTHDGLLMTPLIEGGDVVEPLRERVLGRVVCDDVLIPGTDEVLLPRNTLIDEALCDVIEDNSVDQIKVRSIITCKTDFGICANCYGRDLARGHMINQGEAIGVVAAQSIGEPGTQLTMRTFHIGGAASRATAESSVQVKNTGTLKLQNAKFVTNSEKHLVITSRSSELTIIDEMGREKERYKVPYGSVLSKNDGEAVNSGDTIANWDPHTHPIITEVAGKVQFVDLADGVTMVRQTDELTGLSSIVITDAAQRNATGKEMRPALKLVDAKGKEVMIAGTEIPALYYLPGNAIVNLEDGADVGVGDALARIPQASSKTRDITGGLPRVADLFEARKPKLPAILAEKTGVVAFGKETKGKVRLLITQPSGEVYEEMIPKTRLLNIYEGEPVIKGEVIADGPESPHDILRLRGVAPVANYIVNEVQEVYRLQGVKINDKHIEVIVRQMIRKCEILDAGDSTFLKGEQVEVARVNISNRELEAEGKQPAEYEMQMMGITKASLATESFISAASFQETTRVLTEAAVAGKKDGLRGLKENVIVGRLIPAGTGYSYHQERARRKAAALAPAVESTVSADDAEKALTDALNSDLLSGNH.

4 residues coordinate Zn(2+): C70, C72, C85, and C88. Residues D460, D462, and D464 each coordinate Mg(2+). 4 residues coordinate Zn(2+): C814, C888, C895, and C898.

It belongs to the RNA polymerase beta' chain family. In terms of assembly, the RNAP catalytic core consists of 2 alpha, 1 beta, 1 beta' and 1 omega subunit. When a sigma factor is associated with the core the holoenzyme is formed, which can initiate transcription. The cofactor is Mg(2+). It depends on Zn(2+) as a cofactor.

It carries out the reaction RNA(n) + a ribonucleoside 5'-triphosphate = RNA(n+1) + diphosphate. Its function is as follows. DNA-dependent RNA polymerase catalyzes the transcription of DNA into RNA using the four ribonucleoside triphosphates as substrates. The protein is DNA-directed RNA polymerase subunit beta' of Colwellia psychrerythraea (strain 34H / ATCC BAA-681) (Vibrio psychroerythus).